A 302-amino-acid chain; its full sequence is GTPase Era (302 aa).

Residues 9-177 (YCGFIAIVGR…EKIVRQSLRE (169 aa)) form the Era-type G domain. The interval 17 to 24 (GRPNVGKS) is G1. A GTP-binding site is contributed by 17-24 (GRPNVGKS). Positions 43–47 (QTTRH) are G2. The segment at 64-67 (DTPG) is G3. Residues 64–68 (DTPGL) and 126–129 (NKVD) each bind GTP. Residues 126-129 (NKVD) are G4. Residues 156–158 (ISA) form a G5 region. Positions 208–285 (TGEELPYSVT…HLELWVKVKS (78 aa)) constitute a KH type-2 domain.

It belongs to the TRAFAC class TrmE-Era-EngA-EngB-Septin-like GTPase superfamily. Era GTPase family. Monomer.

It localises to the cytoplasm. The protein localises to the cell inner membrane. An essential GTPase that binds both GDP and GTP, with rapid nucleotide exchange. Plays a role in 16S rRNA processing and 30S ribosomal subunit biogenesis and possibly also in cell cycle regulation and energy metabolism. The protein is GTPase Era of Haemophilus influenzae (strain PittGG).